Reading from the N-terminus, the 485-residue chain is Glutamate--tRNA ligase (485 aa).

Residues 11 to 21 carry the 'HIGH' region motif; it reads PSPTGYMHVGN. The Zn(2+) site is built by Cys108, Cys110, Cys135, and Asp137. Positions 252 to 256 match the 'KMSKS' region motif; it reads KLSKR. Lys255 is a binding site for ATP.

The protein belongs to the class-I aminoacyl-tRNA synthetase family. Glutamate--tRNA ligase type 1 subfamily. As to quaternary structure, monomer. It depends on Zn(2+) as a cofactor.

It localises to the cytoplasm. The catalysed reaction is tRNA(Glu) + L-glutamate + ATP = L-glutamyl-tRNA(Glu) + AMP + diphosphate. Functionally, catalyzes the attachment of glutamate to tRNA(Glu) in a two-step reaction: glutamate is first activated by ATP to form Glu-AMP and then transferred to the acceptor end of tRNA(Glu). This chain is Glutamate--tRNA ligase, found in Clostridium botulinum (strain ATCC 19397 / Type A).